The following is a 278-amino-acid chain: HTH-type transcriptional activator RhaS (278 aa).

The HTH araC/xylS-type domain maps to 174–272; sequence NLLLAWLEDH…NWSPRDIRQG (99 aa). DNA-binding regions (H-T-H motif) lie at residues 191-212 and 239-262; these read DAVA…KQQT and VTDI…RREF.

Binds DNA as a dimer.

Its subcellular location is the cytoplasm. Activates expression of the rhaBAD and rhaT operons. In Escherichia coli O6:H1 (strain CFT073 / ATCC 700928 / UPEC), this protein is HTH-type transcriptional activator RhaS.